The sequence spans 82 residues: Polyferredoxin protein FwdG (82 aa).

4Fe-4S ferredoxin-type domains lie at 4–33 (YELVVYPERCHGCGNCVVSCPVNAKHPETW) and 51–80 (VVTVVNQDLCGGCGACIEACPVNAIELVFK). [4Fe-4S] cluster contacts are provided by cysteine 13, cysteine 16, cysteine 19, cysteine 23, cysteine 60, cysteine 63, cysteine 66, and cysteine 70.

Requires [4Fe-4S] cluster as cofactor.

This is Polyferredoxin protein FwdG (fwdG) from Methanocaldococcus jannaschii (strain ATCC 43067 / DSM 2661 / JAL-1 / JCM 10045 / NBRC 100440) (Methanococcus jannaschii).